We begin with the raw amino-acid sequence, 540 residues long: Glucose-6-phosphate isomerase (540 aa).

The Proton donor role is filled by Glu-350. Active-site residues include His-381 and Lys-503.

The protein belongs to the GPI family.

The protein resides in the cytoplasm. The enzyme catalyses alpha-D-glucose 6-phosphate = beta-D-fructose 6-phosphate. It participates in carbohydrate biosynthesis; gluconeogenesis. The protein operates within carbohydrate degradation; glycolysis; D-glyceraldehyde 3-phosphate and glycerone phosphate from D-glucose: step 2/4. In terms of biological role, catalyzes the reversible isomerization of glucose-6-phosphate to fructose-6-phosphate. This is Glucose-6-phosphate isomerase from Burkholderia pseudomallei (strain 1710b).